The sequence spans 50 residues: Large ribosomal subunit protein bL36B (50 aa).

The protein belongs to the bacterial ribosomal protein bL36 family.

The chain is Large ribosomal subunit protein bL36B from Pseudomonas aeruginosa (strain UCBPP-PA14).